Consider the following 249-residue polypeptide: Probable phosphatase Spea_1436 (249 aa).

His-8, His-10, His-16, His-41, Glu-74, His-102, His-132, Asp-193, and His-195 together coordinate Zn(2+).

This sequence belongs to the PHP family. Zn(2+) serves as cofactor.

The polypeptide is Probable phosphatase Spea_1436 (Shewanella pealeana (strain ATCC 700345 / ANG-SQ1)).